The following is a 174-amino-acid chain: MESQVRQNFHKDCEAAINRQINLELYASYSYLSMAYYFDRDDVALPGFAHFFKQQSEEEREHAEKLLKFQNQRGGRIFLQDVKKPDRDEWGSGLDALECALQLEKNVNQSLLDLHKVCSEHNDPHMCDFLETHYLDEQVKSIKELGDWVTNLRRLGAPQNGMAEYLFDKHTLGK.

Positions 7–156 (QNFHKDCEAA…DWVTNLRRLG (150 aa)) constitute a Ferritin-like diiron domain. Fe cation-binding residues include E24, E59, H62, E104, and Q138.

The protein belongs to the ferritin family. In terms of assembly, in liver, forms a heteromer consisting of middle and heavy subunits. The functional molecule forms a roughly spherical shell with a diameter of 12 nm and contains a central cavity into which the insoluble mineral iron core is deposited. As to expression, liver (at protein level).

It carries out the reaction 4 Fe(2+) + O2 + 4 H(+) = 4 Fe(3+) + 2 H2O. Functionally, stores iron in a soluble, non-toxic, readily available form. Important for iron homeostasis. Has ferroxidase activity. Iron is taken up in the ferrous form and deposited as ferric hydroxides after oxidation. Also plays a role in delivery of iron to cells. Mediates iron uptake in capsule cells of the developing kidney. Delivery to lysosomes is mediated by the cargo receptor NCOA4 for autophagic degradation and release of iron. This is Ferritin, heavy subunit from Trematomus bernacchii (Emerald rockcod).